The following is a 270-amino-acid chain: Thiosulfate dehydrogenase (270 aa).

Positions 1-27 are cleaved as a signal peptide; that stretch reads MRGDVRVHTASPIAAAWLLAVGLVAHA. Cytochrome c domains lie at 44-158 and 174-260; these read PDGA…PVGA and PDGV…LTHP. The heme c site is built by Cys76, Cys79, His80, Cys187, Cys190, and His191.

As to quaternary structure, monomer. Post-translationally, binds 2 heme c groups covalently per subunit.

The protein localises to the periplasm. The catalysed reaction is 2 thiosulfate + 2 Fe(III)-[cytochrome c] = tetrathionate + 2 Fe(II)-[cytochrome c] + 2 H(+). In terms of biological role, catalyzes the oxidation of 2 molecules of thiosulfate to tetrathionate. This chain is Thiosulfate dehydrogenase (tsdA), found in Allochromatium vinosum (strain ATCC 17899 / DSM 180 / NBRC 103801 / NCIMB 10441 / D) (Chromatium vinosum).